Reading from the N-terminus, the 357-residue chain is UDP-N-acetylglucosamine--N-acetylmuramyl-(pentapeptide) pyrophosphoryl-undecaprenol N-acetylglucosamine transferase (357 aa).

Residues 13-15 (SAG), R166, S196, and Q291 each bind UDP-N-acetyl-alpha-D-glucosamine.

Belongs to the glycosyltransferase 28 family. MurG subfamily.

Its subcellular location is the cell membrane. The enzyme catalyses di-trans,octa-cis-undecaprenyl diphospho-N-acetyl-alpha-D-muramoyl-L-alanyl-D-glutamyl-meso-2,6-diaminopimeloyl-D-alanyl-D-alanine + UDP-N-acetyl-alpha-D-glucosamine = di-trans,octa-cis-undecaprenyl diphospho-[N-acetyl-alpha-D-glucosaminyl-(1-&gt;4)]-N-acetyl-alpha-D-muramoyl-L-alanyl-D-glutamyl-meso-2,6-diaminopimeloyl-D-alanyl-D-alanine + UDP + H(+). The protein operates within cell wall biogenesis; peptidoglycan biosynthesis. Functionally, cell wall formation. Catalyzes the transfer of a GlcNAc subunit on undecaprenyl-pyrophosphoryl-MurNAc-pentapeptide (lipid intermediate I) to form undecaprenyl-pyrophosphoryl-MurNAc-(pentapeptide)GlcNAc (lipid intermediate II). The protein is UDP-N-acetylglucosamine--N-acetylmuramyl-(pentapeptide) pyrophosphoryl-undecaprenol N-acetylglucosamine transferase of Clostridium perfringens (strain ATCC 13124 / DSM 756 / JCM 1290 / NCIMB 6125 / NCTC 8237 / Type A).